A 945-amino-acid polypeptide reads, in one-letter code: Probable inorganic carbon transporter subunit DabA (945 aa).

Zn(2+) is bound by residues Cys-408, Asp-410, His-651, and Cys-666.

This sequence belongs to the inorganic carbon transporter (TC 9.A.2) DabA family. As to quaternary structure, forms a complex with DabB. Zn(2+) serves as cofactor.

The protein resides in the cell inner membrane. In terms of biological role, part of an energy-coupled inorganic carbon pump. The polypeptide is Probable inorganic carbon transporter subunit DabA (Sulfurihydrogenibium azorense (strain DSM 15241 / OCM 825 / Az-Fu1)).